The chain runs to 21 residues: Formate ester dehydrogenase beta chain (21 aa).

Heterotrimer composed of an alpha, a beta and a gamma chain.

The protein is Formate ester dehydrogenase beta chain of Amycolatopsis methanolica.